Here is a 305-residue protein sequence, read N- to C-terminus: UDP-N-acetylenolpyruvoylglucosamine reductase 2 (305 aa).

The region spanning 33-197 (VGGKADVFVA…LEARFELEEG (165 aa)) is the FAD-binding PCMH-type domain. Residue Arg176 is part of the active site. Ser226 functions as the Proton donor in the catalytic mechanism. Glu296 is an active-site residue.

This sequence belongs to the MurB family. Requires FAD as cofactor.

Its subcellular location is the cytoplasm. The enzyme catalyses UDP-N-acetyl-alpha-D-muramate + NADP(+) = UDP-N-acetyl-3-O-(1-carboxyvinyl)-alpha-D-glucosamine + NADPH + H(+). It participates in cell wall biogenesis; peptidoglycan biosynthesis. In terms of biological role, cell wall formation. The chain is UDP-N-acetylenolpyruvoylglucosamine reductase 2 (murB2) from Bacillus anthracis.